The primary structure comprises 702 residues: BRCA1-associated RING domain protein 1 (702 aa).

The segment at 18-67 adopts an RING-type zinc-finger fold; it reads CVKCKKPRGDLQYLGSSCKHAYCWECIATFQQKPSGKRSSVARHMCPSCA. Disordered regions lie at residues 153-205 and 281-346; these read DENR…TSVK and ASMS…YGTR. Over residues 174–188 the composition is skewed to polar residues; the sequence is ASPTRNSTKRPSTVS. Positions 312-321 are enriched in basic and acidic residues; it reads IKSDKIERRS. 3 ANK repeats span residues 347–376, 379–408, and 413–442; these read RGEA…CVNE, DGKT…VINA, and TLET…SIKI. One can recognise a BRCT domain in the interval 601 to 702; it reads MQPKLFAGCK…LGCSITTPPH (102 aa).

Heterodimer (via RING-type zinc finger) with brc-1 to form the core CeBCD complex. Brc-1-brd-1 heterodimer-containing CeBCD complexes bound to chromatin are activated as an E3-ubiquitin ligase in response to DNA damage. The heterodimer interacts with the recombinase rad-51 following ionizing irradiation; the interaction is direct. The heterodimer interacts the E2-ubiquitin-conjugating enzyme let-70 following ionizing irradiation. The heterodimer interacts with the pro-crossover proteins msh-5 and syp-3. Interacts with smt-3, tac-1 and ubc-9. In terms of processing, autoubiquitinated. Post-translationally, phosphorylation of CeBCD complexes is required for E3 ubiquitin-protein ligase activity.

The protein resides in the cytoplasm. It localises to the nucleus. The protein localises to the chromosome. It carries out the reaction S-ubiquitinyl-[E2 ubiquitin-conjugating enzyme]-L-cysteine + [acceptor protein]-L-lysine = [E2 ubiquitin-conjugating enzyme]-L-cysteine + N(6)-ubiquitinyl-[acceptor protein]-L-lysine.. It functions in the pathway protein modification; protein ubiquitination. Its activity is regulated as follows. E3 ubiquitin-protein ligase activity of CeBCD complexes occurs at DNA damage sites. Following DNA damage, E3 ubiquitin-protein ligase activity is reduced by caffeine treatment (inhibitor of ATM and ATK kinase activity). Its function is as follows. Constituent of the CeBCD complex that possesses E3 ubiquitin-protein ligase activity. When bound to chromatin, the brc-1-brd-1 heterodimer within the CeBCD complex is inactive during normal conditions, but in response to DNA damage, the brc-1-brd-1 heterodimer associates with other proteins such as the recombinase rad-51 or the E2-ubiquitin-conjugating enzyme let-70, which activate the CeBCD complex as an E3-ubiquitin ligase. Moreover, association between the brc-1-brd-1 heterodimer and rad-51 and let-70, probably requires DNA checkpoint proteins such as atl-1 and mre-11 in order to induce ubiquitination at DNA damage sites. To this end, the brc-1-brd-1 heterodimer coordinates a diverse range of cellular pathways such as DNA damage repair, ubiquitination and transcriptional regulation to maintain genomic stability. Plays a role in triggering cellular responses at damage sites in response to DNA damage that may be induced by ionizing radiation for example. In particular, protects against chromosome non-disjunction and nuclear fragmentation during meiotic double-strand break repair to ensure sister chromatid recombination and aid chromosome stability. This chain is BRCA1-associated RING domain protein 1, found in Caenorhabditis elegans.